Consider the following 109-residue polypeptide: Flagellar hook-basal body complex protein FliE (109 aa).

Residues 1 to 38 (MQAIHNDKSLLSPFSELNTDNRTKREESGNAFKEQKGG) form a disordered region. A compositionally biased stretch (basic and acidic residues) spans 19 to 38 (TDNRTKREESGNAFKEQKGG).

The protein belongs to the FliE family.

It is found in the bacterial flagellum basal body. The chain is Flagellar hook-basal body complex protein FliE from Helicobacter pylori (strain G27).